Reading from the N-terminus, the 1441-residue chain is Cleavage and polyadenylation specificity factor subunit 1 (1441 aa).

4 disordered regions span residues 404-435 (PASS…GGKT), 545-569 (EEET…DGRR), 713-775 (GGAR…PAPF), and 899-921 (FREK…EGSG). Residues 410 to 419 (EAADKEEPPS) are compositionally biased toward basic and acidic residues. Phosphoserine occurs at positions 754 and 764. A compositionally biased stretch (basic and acidic residues) spans 756 to 773 (SKEEARRSSQPPADRDPA).

It belongs to the CPSF1 family. As to quaternary structure, component of the cleavage and polyadenylation specificity factor (CPSF) complex, composed of CPSF1, CPSF2, CPSF3, CPSF4 and FIP1L1. Found in a complex with CPSF1, FIP1L1 and PAPOLA. Interacts with FIP1L1 and SRRM1. Interacts with TUT1; the interaction is direct and mediates the recruitment of the CPSF complex on the 3'UTR of selected pre-mRNAs. Interacts with TENT2/GLD2.

Its subcellular location is the nucleus. It localises to the nucleoplasm. In terms of biological role, component of the cleavage and polyadenylation specificity factor (CPSF) complex that plays a key role in pre-mRNA 3'-end formation, recognizing the AAUAAA signal sequence and interacting with poly(A) polymerase and other factors to bring about cleavage and poly(A) addition. This subunit is involved in the RNA recognition step of the polyadenylation reaction. May play a role in eye morphogenesis and the development of retinal ganglion cell projections to the midbrain. The polypeptide is Cleavage and polyadenylation specificity factor subunit 1 (Cpsf1) (Mus musculus (Mouse)).